A 101-amino-acid chain; its full sequence is Small ribosomal subunit protein uS14 (101 aa).

Residues 1–10 (MAKKSSIEKN) are compositionally biased toward basic and acidic residues. Residues 1–23 (MAKKSSIEKNNRRKRMTGNAAAK) are disordered.

Belongs to the universal ribosomal protein uS14 family. Part of the 30S ribosomal subunit. Contacts proteins S3 and S10.

Its function is as follows. Binds 16S rRNA, required for the assembly of 30S particles and may also be responsible for determining the conformation of the 16S rRNA at the A site. In Nitrobacter hamburgensis (strain DSM 10229 / NCIMB 13809 / X14), this protein is Small ribosomal subunit protein uS14.